The chain runs to 275 residues: MEMO1 family protein Nmar_0215 (275 aa).

Belongs to the MEMO1 family.

In Nitrosopumilus maritimus (strain SCM1), this protein is MEMO1 family protein Nmar_0215.